The primary structure comprises 302 residues: N-acetylmuramic acid 6-phosphate etherase (302 aa).

One can recognise an SIS domain in the interval 58–221; that stretch reads IGEAFLNGGR…STGAMVKTGK (164 aa). The Proton donor role is filled by Glu86. The active site involves Glu117.

Belongs to the GCKR-like family. MurNAc-6-P etherase subfamily. As to quaternary structure, homodimer.

The catalysed reaction is N-acetyl-D-muramate 6-phosphate + H2O = N-acetyl-D-glucosamine 6-phosphate + (R)-lactate. It functions in the pathway amino-sugar metabolism; N-acetylmuramate degradation. Functionally, specifically catalyzes the cleavage of the D-lactyl ether substituent of MurNAc 6-phosphate, producing GlcNAc 6-phosphate and D-lactate. This Clostridium botulinum (strain Hall / ATCC 3502 / NCTC 13319 / Type A) protein is N-acetylmuramic acid 6-phosphate etherase.